The following is a 243-amino-acid chain: Eukaryotic translation initiation factor 4E-2 (243 aa).

It belongs to the eukaryotic initiation factor 4E family. As to quaternary structure, eIF4F is a multi-subunit complex, the composition of which varies with external and internal environmental conditions. It is composed of at least eIF4A, eIF4E and eIF4G. eIF4E is also known to interact with other partners.

Functionally, recognizes and binds the 7-methylguanosine-containing mRNA cap during an early step in the initiation of protein synthesis and facilitates ribosome binding by inducing the unwinding of the mRNAs secondary structures. The sequence is that of Eukaryotic translation initiation factor 4E-2 (tif452) from Schizosaccharomyces pombe (strain 972 / ATCC 24843) (Fission yeast).